Consider the following 195-residue polypeptide: Thymidine kinase (195 aa).

ATP-binding positions include 15–22 (GPMYSGKS), Glu-23, 57–58 (SH), and 88–91 (DEVQ). Catalysis depends on Glu-89, which acts as the Proton acceptor. Phe-120 contacts substrate. Zn(2+)-binding residues include Cys-145 and Cys-148. Position 179 (Tyr-179) interacts with substrate. 2 residues coordinate Zn(2+): Cys-183 and Cys-186.

This sequence belongs to the thymidine kinase family.

The protein localises to the cytoplasm. The catalysed reaction is thymidine + ATP = dTMP + ADP + H(+). The chain is Thymidine kinase from Clostridium acetobutylicum (strain ATCC 824 / DSM 792 / JCM 1419 / IAM 19013 / LMG 5710 / NBRC 13948 / NRRL B-527 / VKM B-1787 / 2291 / W).